The following is a 1063-amino-acid chain: MASTTPITMEDLQKALEAQSRALRAELAAGASQLRRPRPPRQRDSSTSGDDSGRDSGGPRRRRGNRGRGQRKDWSKAPPPPEERQESRSQTPAPKPPRAPPQPPQPPRMQTGRGGTAPRPELGPPTNPFQAAVARGLRPPLHDPDTEAPTEACVTSWLWSEGEGAVFYRVDLHFTNLGTPPLDEDGRWDPALMYNPCGPEPPAHVVRAYNQPAGDVRGIWGKGERTYAEQDFRVGGTRWHRLLRMPVRGLDGDSAPLPPHTTERIETRSARHPWRIRFGAPQVFLAGLLLAAVAVGTARAGLQPRTDIAAPPAPPQAPRAHGKHYGHHHHQLPFLGHDGHHGGTLRVGQHHRNASDVLPGHWLQGSWGCYNLSDWHQGTHICHTKHMDFWCVEHDRPPPVTPTPLTTAANSTTAATPATTPAPCHAGLNDSCGGFLSGCGPMRLRHGADTRCGRLICGLSTTAQYPPTRFGCTMRWGLPPWELVVLTARPEDGWTCRGVPAHPGTRCPELVSPMGHATCSPASALWLATANALSLDHALAAVVLLVPWVLIFMLCRRACRRRGAAAALTAVVLQGYNPPAYGEEAFTYLCTAPGCATQTPVPVRLAGVRFESKIVDGGCFAPWDLEATGACICEIPTDVSCEGLGAWVPAAPCARIWNGTQRACTLWAVNAYSSGGYAQLASYFNPGGSYYKQYHPTACDVEPAFGHSDAACWGFPTDTVMSVFALASYVQHPDKTVRVKFHTETRTVWQLSVAGVSCNVTTEHPFCNTPHGQLEVQVPPDPGDLVEYIMNYTGNQQSRWGLGSPNCHGPDWASPVCQRHSPDCSRLVGATPERPRLRLVDADDPLLRTAPGPGEVWVTPVIGSQARKCGLHIRAGPYGHATVEMPEWIHAHTTSDPWHPPGPLGLKFKTVRPVALPRALAPPRNVRVTGCYQCGTPALVEGLAPGGGNCHLTVNGEDVGAFPPGKFVTAALLNTPPPYQVSCGGESDRASARVIDPAAQSFTGVVYGTHTTAVSETRQTWAEWAAAHWWQLTLGAICALLLAGLLACCAKCLYYLRGAIAPR.

The disordered stretch occupies residues 23–131 (LRAELAAGAS…LGPPTNPFQA (109 aa)). The interval 30–69 (GASQLRRPRPPRQRDSSTSGDDSGRDSGGPRRRRGNRGRG) is human C1QBP/SF2P32-binding. Serine 46 carries the phosphoserine; by host modification. Positions 59-69 (PRRRRGNRGRG) are enriched in basic residues. Residues 70-87 (QRKDWSKAPPPPEERQES) show a composition bias toward basic and acidic residues. A compositionally biased stretch (pro residues) spans 93-107 (APKPPRAPPQPPQPP). Cysteine 153 and cysteine 197 are joined by a disulfide. The tract at residues 279 to 300 (GAPQVFLAGLLLAAVAVGTARA) is functions as E2 signal peptide. The Extracellular portion of the chain corresponds to 301–534 (GLQPRTDIAA…LWLATANALS (234 aa)). Residues 305-327 (RTDIAAPPAPPQAPRAHGKHYGH) form a disordered region. N-linked (GlcNAc...) asparagine; by host glycans are attached at residues asparagine 353, asparagine 371, asparagine 410, and asparagine 429. The chain crosses the membrane as a helical span at residues 535 to 555 (LDHALAAVVLLVPWVLIFMLC). Residues 556–582 (RRACRRRGAAAALTAVVLQGYNPPAYG) lie on the Cytoplasmic side of the membrane. Residues 563–582 (GAAAALTAVVLQGYNPPAYG) form a functions as E1 signal peptide region. At 583–1028 (EEAFTYLCTA…QTWAEWAAAH (446 aa)) the chain is on the extracellular side. Intrachain disulfides connect cysteine 590/cysteine 595, cysteine 619/cysteine 824, cysteine 641/cysteine 653, cysteine 699/cysteine 712, cysteine 758/cysteine 767, cysteine 807/cysteine 817, cysteine 931/cysteine 934, and cysteine 950/cysteine 983. N-linked (GlcNAc...) asparagine; by host glycosylation occurs at asparagine 658. Asparagine 670 and alanine 671 together coordinate Ca(2+). Ca(2+) contacts are provided by aspartate 718 and threonine 719. N-linked (GlcNAc...) asparagine; by host glycans are attached at residues asparagine 759 and asparagine 791. Residues threonine 1011 and threonine 1012 are each glycosylated (O-linked (GalNAc...) threonine; by host). The chain crosses the membrane as a helical span at residues 1029 to 1049 (WWQLTLGAICALLLAGLLACC). Residues 1050 to 1063 (AKCLYYLRGAIAPR) lie on the Extracellular side of the membrane.

In terms of assembly, homodimer; further assembles into homooligomer. Interacts with human C1QBP. Interacts (via N-terminus) with protease/methyltransferase p150. As to quaternary structure, heterodimer with spike glycoprotein E2. Heterodimer with spike glycoprotein E1. In terms of processing, structural polyprotein: Specific enzymatic cleavages in vivo yield mature proteins. Two signal peptidase-mediated cleavages within the polyprotein produce the structural proteins capsid, E2, and E1. The E2 signal peptide remains attached to the C-terminus of the capsid protein after cleavage by the signal peptidase. Another signal peptide at E2 C-terminus directs E1 to the ER, with a similar mechanism. Post-translationally, contains three N-linked oligosaccharides. Capsid is phosphorylated on Ser-46 by host. This phosphorylation negatively regulates capsid protein RNA-binding activity. Dephosphorylated by human PP1A.

It localises to the virion. The protein resides in the host cytoplasm. The protein localises to the host mitochondrion. It is found in the virion membrane. Its subcellular location is the host Golgi apparatus membrane. Capsid protein interacts with genomic RNA and assembles into icosahedric core particles 65-70 nm in diameter. The resulting nucleocapsid eventually associates with the cytoplasmic domain of E2 at the cell membrane, leading to budding and formation of mature virions from host Golgi membranes. Phosphorylation negatively regulates RNA-binding activity, possibly delaying virion assembly during the viral replication phase. Capsid protein dimerizes and becomes disulfide-linked in the virion. Modulates genomic RNA replication. Modulates subgenomic RNA synthesis by interacting with human C1QBP/SF2P32. Induces both perinuclear clustering of mitochondria and the formation of electron-dense intermitochondrial plaques, both hallmarks of rubella virus infected cells. Induces apoptosis when expressed in transfected cells. Its function is as follows. Responsible for viral attachment to target host cell, by binding to the cell receptor. Its transport to the plasma membrane depends on interaction with E1 protein. The surface glycoproteins display an irregular helical organization and a pseudo-tetrameric inner nucleocapsid arrangement. Functionally, class II viral fusion protein. Fusion activity is inactive as long as E1 is bound to E2 in mature virion. After virus attachment to target cell and clathrin-mediated endocytosis, acidification of the endosome would induce dissociation of E1/E2 heterodimer and concomitant trimerization of the E1 subunits. This E1 homotrimer is fusion active, and promotes release of viral nucleocapsid in cytoplasm after endosome and viral membrane fusion. The cytoplasmic tail of spike glycoprotein E1 modulates virus release. The surface glycoproteins display an irregular helical organization and a pseudo-tetrameric inner nucleocapsid arrangement. The sequence is that of Structural polyprotein from Rubella virus (strain BRD1) (RUBV).